A 203-amino-acid polypeptide reads, in one-letter code: Large ribosomal subunit protein bL25 (203 aa).

Belongs to the bacterial ribosomal protein bL25 family. CTC subfamily. As to quaternary structure, part of the 50S ribosomal subunit; part of the 5S rRNA/L5/L18/L25 subcomplex. Contacts the 5S rRNA. Binds to the 5S rRNA independently of L5 and L18.

In terms of biological role, this is one of the proteins that binds to the 5S RNA in the ribosome where it forms part of the central protuberance. The sequence is that of Large ribosomal subunit protein bL25 from Rickettsia typhi (strain ATCC VR-144 / Wilmington).